A 248-amino-acid chain; its full sequence is Small ribosomal subunit protein uS2 (248 aa).

It belongs to the universal ribosomal protein uS2 family.

The polypeptide is Small ribosomal subunit protein uS2 (Leptothrix cholodnii (strain ATCC 51168 / LMG 8142 / SP-6) (Leptothrix discophora (strain SP-6))).